A 227-amino-acid polypeptide reads, in one-letter code: UPF0758 protein PG_0894 (227 aa).

An MPN domain is found at 104–227; that stretch reads SITDSRMAYR…YFSFADEGLL (124 aa). Zn(2+)-binding residues include H175, H177, and D188. Positions 175–188 match the JAMM motif motif; the sequence is HNHPSGTVRPSEQD.

Belongs to the UPF0758 family.

The polypeptide is UPF0758 protein PG_0894 (Porphyromonas gingivalis (strain ATCC BAA-308 / W83)).